The sequence spans 207 residues: Large ribosomal subunit protein uL4 (207 aa).

The tract at residues 49–78 (HAVKNRSAVSGGGRKPWRQKGTGRARQGSI) is disordered.

This sequence belongs to the universal ribosomal protein uL4 family. Part of the 50S ribosomal subunit.

In terms of biological role, one of the primary rRNA binding proteins, this protein initially binds near the 5'-end of the 23S rRNA. It is important during the early stages of 50S assembly. It makes multiple contacts with different domains of the 23S rRNA in the assembled 50S subunit and ribosome. Forms part of the polypeptide exit tunnel. This Streptococcus uberis (strain ATCC BAA-854 / 0140J) protein is Large ribosomal subunit protein uL4.